The sequence spans 368 residues: S-adenosylmethionine decarboxylase proenzyme (368 aa).

Catalysis depends on residues Glu-26 and Glu-29. Residue Ser-83 is the Schiff-base intermediate with substrate; via pyruvic acid of the active site. Ser-83 bears the Pyruvic acid (Ser); by autocatalysis mark. Cys-97 (proton donor; for catalytic activity) is an active-site residue. Active-site proton acceptor; for processing activity residues include Ser-246 and His-261.

This sequence belongs to the eukaryotic AdoMetDC family. As to quaternary structure, heterotetramer of two alpha and two beta chains. Pyruvate serves as cofactor. In terms of processing, is synthesized initially as an inactive proenzyme. Formation of the active enzyme involves a self-maturation process in which the active site pyruvoyl group is generated from an internal serine residue via an autocatalytic post-translational modification. Two non-identical subunits are generated from the proenzyme in this reaction, and the pyruvate is formed at the N-terminus of the alpha chain, which is derived from the carboxyl end of the proenzyme. The post-translation cleavage follows an unusual pathway, termed non-hydrolytic serinolysis, in which the side chain hydroxyl group of the serine supplies its oxygen atom to form the C-terminus of the beta chain, while the remainder of the serine residue undergoes an oxidative deamination to produce ammonia and the pyruvoyl group blocking the N-terminus of the alpha chain.

It carries out the reaction S-adenosyl-L-methionine + H(+) = S-adenosyl 3-(methylsulfanyl)propylamine + CO2. It participates in amine and polyamine biosynthesis; S-adenosylmethioninamine biosynthesis; S-adenosylmethioninamine from S-adenosyl-L-methionine: step 1/1. Functionally, essential for biosynthesis of the polyamines spermidine and spermine. Polyamines are essential for cell proliferation and are implicated in cellular processes, ranging from DNA replication to apoptosis. This chain is S-adenosylmethionine decarboxylase proenzyme, found in Caenorhabditis elegans.